Consider the following 688-residue polypeptide: Lipase (688 aa).

An N-terminal signal peptide occupies residues 1–35; the sequence is MKTRQNKYSIRKFSVGASSILIAALLFMGGGSAQA. The disordered stretch occupies residues 31–309; that stretch reads GSAQAAEQQQ…KSAKQKQYKN (279 aa). Positions 36–302 are cleaved as a propeptide — removed in mature form; the sequence is AEQQQDKGTV…KNEDQTNKSA (267 aa). Residues 45-54 show a composition bias toward polar residues; the sequence is VENSTTQSIG. Composition is skewed to basic and acidic residues over residues 84–95 and 103–143; these read ESLHNETPKNED and SQND…KHAS. Composition is skewed to polar residues over residues 144 to 175 and 184 to 211; these read ENNQTLHSKAAQSNEDVKTKPSQLDNTTAQQE and KQDTQSSKTTDLLRATGQNQSKDSQSTE. A compositionally biased stretch (basic and acidic residues) spans 227–268; sequence KNDDDKVETFNLNSKEEPLKVDKQANPTTDKDKSSKNDKGSH. Residues 274–289 show a composition bias toward polar residues; that stretch reads LESNAVATTNKQSKQQ. The active-site Nucleophile is Ser418. Asp609 functions as the Charge relay system in the catalytic mechanism. Asp647 is a Ca(2+) binding site. Catalysis depends on His648, which acts as the Charge relay system. The Ca(2+) site is built by Asp650, Asp655, and Asp658.

The protein belongs to the AB hydrolase superfamily. Lipase family.

It is found in the secreted. The enzyme catalyses a triacylglycerol + H2O = a diacylglycerol + a fatty acid + H(+). The chain is Lipase (lip) from Staphylococcus epidermidis (strain ATCC 35984 / DSM 28319 / BCRC 17069 / CCUG 31568 / BM 3577 / RP62A).